The following is a 320-amino-acid chain: Major pollen allergen Pha a 5.1 (320 aa).

Residues 1–23 (MAVQKYTMALFLAVALVAGPAAP) form the signal peptide. The tract at residues 21–45 (AAPTPPTPRTPPLLPPPRARDKATL) is disordered. Residues 22–37 (APTPPTPRTPPLLPPP) are compositionally biased toward pro residues.

It belongs to the Poa p IX/Phl p VI allergen family.

The polypeptide is Major pollen allergen Pha a 5.1 (Phalaris aquatica (Canary grass)).